Consider the following 127-residue polypeptide: Protein ApaG (127 aa).

Residues 3–127 (KTSIPDFQIT…FYLIAPLALH (125 aa)) form the ApaG domain.

The polypeptide is Protein ApaG (Bdellovibrio bacteriovorus (strain ATCC 15356 / DSM 50701 / NCIMB 9529 / HD100)).